A 357-amino-acid polypeptide reads, in one-letter code: Aurora kinase A- and ninein-interacting protein (357 aa).

A compositionally biased stretch (polar residues) spans Leu-71–Gln-91. Residues Leu-71–Lys-98 form a disordered region. Residues Arg-187–Phe-357 are interaction with AURKA. Residues Ser-267 and Ser-292 each carry the phosphoserine modification. The interval Lys-281–Phe-357 is interaction with RBBP8/CtIP.

It belongs to the AUNIP family. Interacts (via C-terminus) with AURKA (via C-terminus). Interacts (via N-terminus) with NIN; this interaction blocks NIN phosphorylation by both AURKA and GSK3B. Identified in a complex with NIN and AURKA. Interacts with RBBP8/CtIP. In terms of tissue distribution, expressed in heart, skeletal muscles, placenta and testis.

The protein resides in the nucleus. It localises to the chromosome. Its subcellular location is the cytoplasm. The protein localises to the cytoskeleton. It is found in the microtubule organizing center. The protein resides in the centrosome. It localises to the spindle pole. Functionally, DNA-binding protein that accumulates at DNA double-strand breaks (DSBs) following DNA damage and promotes DNA resection and homologous recombination. Serves as a sensor of DNA damage: binds DNA with a strong preference for DNA substrates that mimic structures generated at stalled replication forks, and anchors RBBP8/CtIP to DSB sites to promote DNA end resection and ensuing homologous recombination repair. Inhibits non-homologous end joining (NHEJ). Required for the dynamic movement of AURKA at the centrosomes and spindle apparatus during the cell cycle. The sequence is that of Aurora kinase A- and ninein-interacting protein from Homo sapiens (Human).